Here is a 419-residue protein sequence, read N- to C-terminus: Light-independent protochlorophyllide reductase subunit N (419 aa).

3 residues coordinate [4Fe-4S] cluster: Cys-17, Cys-42, and Cys-103.

It belongs to the BchN/ChlN family. Protochlorophyllide reductase is composed of three subunits; ChlL, ChlN and ChlB. Forms a heterotetramer of two ChlB and two ChlN subunits. Requires [4Fe-4S] cluster as cofactor.

The catalysed reaction is chlorophyllide a + oxidized 2[4Fe-4S]-[ferredoxin] + 2 ADP + 2 phosphate = protochlorophyllide a + reduced 2[4Fe-4S]-[ferredoxin] + 2 ATP + 2 H2O. It functions in the pathway porphyrin-containing compound metabolism; chlorophyll biosynthesis (light-independent). In terms of biological role, component of the dark-operative protochlorophyllide reductase (DPOR) that uses Mg-ATP and reduced ferredoxin to reduce ring D of protochlorophyllide (Pchlide) to form chlorophyllide a (Chlide). This reaction is light-independent. The NB-protein (ChlN-ChlB) is the catalytic component of the complex. In Prochlorococcus marinus (strain NATL1A), this protein is Light-independent protochlorophyllide reductase subunit N.